An 891-amino-acid chain; its full sequence is DNA mismatch repair protein MutS (891 aa).

646–653 is an ATP binding site; sequence GPNMAGKS.

The protein belongs to the DNA mismatch repair MutS family.

In terms of biological role, this protein is involved in the repair of mismatches in DNA. It is possible that it carries out the mismatch recognition step. This protein has a weak ATPase activity. The protein is DNA mismatch repair protein MutS of Rickettsia typhi (strain ATCC VR-144 / Wilmington).